Reading from the N-terminus, the 404-residue chain is Glucose-1-phosphate adenylyltransferase (404 aa).

Alpha-D-glucose 1-phosphate is bound by residues Tyr99, Gly164, 179–180 (EK), and Ser197.

It belongs to the bacterial/plant glucose-1-phosphate adenylyltransferase family.

It catalyses the reaction alpha-D-glucose 1-phosphate + ATP + H(+) = ADP-alpha-D-glucose + diphosphate. It participates in capsule biogenesis; capsule polysaccharide biosynthesis. Its pathway is glycan biosynthesis; glycogen biosynthesis. In terms of biological role, involved in the biosynthesis of ADP-glucose, a building block, required in the biosynthesis of maltose-1-phosphate (M1P) and in the elongation reactions to produce linear alpha-1,4-glucans. Catalyzes the reaction between ATP and alpha-D-glucose 1-phosphate (G1P) to produce pyrophosphate and ADP-Glc. The polypeptide is Glucose-1-phosphate adenylyltransferase (Mycobacterium ulcerans (strain Agy99)).